A 545-amino-acid chain; its full sequence is ATP synthase subunit alpha (545 aa).

Residue 173 to 180 participates in ATP binding; it reads GDRQTGKT.

Belongs to the ATPase alpha/beta chains family. F-type ATPases have 2 components, CF(1) - the catalytic core - and CF(0) - the membrane proton channel. CF(1) has five subunits: alpha(3), beta(3), gamma(1), delta(1), epsilon(1). CF(0) has three main subunits: a(1), b(2) and c(9-12). The alpha and beta chains form an alternating ring which encloses part of the gamma chain. CF(1) is attached to CF(0) by a central stalk formed by the gamma and epsilon chains, while a peripheral stalk is formed by the delta and b chains.

It localises to the cell membrane. It carries out the reaction ATP + H2O + 4 H(+)(in) = ADP + phosphate + 5 H(+)(out). Produces ATP from ADP in the presence of a proton gradient across the membrane. The alpha chain is a regulatory subunit. This Clavibacter sepedonicus (Clavibacter michiganensis subsp. sepedonicus) protein is ATP synthase subunit alpha.